Reading from the N-terminus, the 137-residue chain is Putative transcription elongation factor S-II-like protein 055R (137 aa).

The TFIIS-type zinc finger occupies Asp85–Thr136. The Zn(2+) site is built by Cys89, Cys103, Cys128, and Cys131.

This sequence belongs to the IIV-6 349L family.

This chain is Putative transcription elongation factor S-II-like protein 055R, found in Aedes vexans (Inland floodwater mosquito).